The following is a 365-amino-acid chain: Histidinol-phosphate aminotransferase (365 aa).

K227 is subject to N6-(pyridoxal phosphate)lysine.

Belongs to the class-II pyridoxal-phosphate-dependent aminotransferase family. Histidinol-phosphate aminotransferase subfamily. In terms of assembly, homodimer. Pyridoxal 5'-phosphate is required as a cofactor.

The catalysed reaction is L-histidinol phosphate + 2-oxoglutarate = 3-(imidazol-4-yl)-2-oxopropyl phosphate + L-glutamate. It participates in amino-acid biosynthesis; L-histidine biosynthesis; L-histidine from 5-phospho-alpha-D-ribose 1-diphosphate: step 7/9. This chain is Histidinol-phosphate aminotransferase, found in Campylobacter concisus (strain 13826).